Consider the following 197-residue polypeptide: Probable GTP-binding protein EngB (197 aa).

Positions 22 to 197 constitute an EngB-type G domain; sequence TGVEVAFAGR…LKEKLDIWYQ (176 aa). GTP is bound by residues 30-37, 57-61, 75-78, 142-145, and 177-179; these read GRSNAGKS, GRTQL, DLPG, TKAD, and FSS. 2 residues coordinate Mg(2+): Ser-37 and Thr-59.

This sequence belongs to the TRAFAC class TrmE-Era-EngA-EngB-Septin-like GTPase superfamily. EngB GTPase family. Mg(2+) is required as a cofactor.

Functionally, necessary for normal cell division and for the maintenance of normal septation. This is Probable GTP-binding protein EngB from Francisella philomiragia subsp. philomiragia (strain ATCC 25017 / CCUG 19701 / FSC 153 / O#319-036).